A 281-amino-acid polypeptide reads, in one-letter code: 3-methyl-2-oxobutanoate hydroxymethyltransferase (281 aa).

Residues D49 and D88 each contribute to the Mg(2+) site. 3-methyl-2-oxobutanoate-binding positions include 49-50 (DS), D88, and K118. A Mg(2+)-binding site is contributed by E120. Residue E186 is the Proton acceptor of the active site.

This sequence belongs to the PanB family. Homodecamer; pentamer of dimers. Mg(2+) is required as a cofactor.

It localises to the cytoplasm. It catalyses the reaction 3-methyl-2-oxobutanoate + (6R)-5,10-methylene-5,6,7,8-tetrahydrofolate + H2O = 2-dehydropantoate + (6S)-5,6,7,8-tetrahydrofolate. The protein operates within cofactor biosynthesis; (R)-pantothenate biosynthesis; (R)-pantoate from 3-methyl-2-oxobutanoate: step 1/2. Its function is as follows. Catalyzes the reversible reaction in which hydroxymethyl group from 5,10-methylenetetrahydrofolate is transferred onto alpha-ketoisovalerate to form ketopantoate. In Chelativorans sp. (strain BNC1), this protein is 3-methyl-2-oxobutanoate hydroxymethyltransferase.